We begin with the raw amino-acid sequence, 102 residues long: Cytochrome c3 (102 aa).

Heme c is bound by residues H26, H29, C34, C37, H38, H39, C50, C55, H56, H73, C81, C84, H85, C95, C98, and H99.

It depends on heme as a cofactor.

The protein localises to the periplasm. In terms of biological role, participates in sulfate respiration coupled with phosphorylation by transferring electrons from the enzyme dehydrogenase to ferredoxin. In Desulfovibrio desulfuricans, this protein is Cytochrome c3.